The following is a 419-amino-acid chain: D-amino acid dehydrogenase (419 aa).

3-17 (VLILGSGVVGVTSAY) contributes to the FAD binding site.

Belongs to the DadA oxidoreductase family. FAD is required as a cofactor.

The catalysed reaction is a D-alpha-amino acid + A + H2O = a 2-oxocarboxylate + AH2 + NH4(+). Its pathway is amino-acid degradation; D-alanine degradation; NH(3) and pyruvate from D-alanine: step 1/1. Its function is as follows. Oxidative deamination of D-amino acids. The chain is D-amino acid dehydrogenase from Chromohalobacter salexigens (strain ATCC BAA-138 / DSM 3043 / CIP 106854 / NCIMB 13768 / 1H11).